A 539-amino-acid chain; its full sequence is Chaperonin GroEL (539 aa).

Residues 29–32, 86–90, Gly-412, 475–477, and Asp-491 each bind ATP; these read TLGP, DGTTT, and NAA.

Belongs to the chaperonin (HSP60) family. In terms of assembly, forms a cylinder of 14 subunits composed of two heptameric rings stacked back-to-back. Interacts with the co-chaperonin GroES.

The protein localises to the cytoplasm. The enzyme catalyses ATP + H2O + a folded polypeptide = ADP + phosphate + an unfolded polypeptide.. Functionally, together with its co-chaperonin GroES, plays an essential role in assisting protein folding. The GroEL-GroES system forms a nano-cage that allows encapsulation of the non-native substrate proteins and provides a physical environment optimized to promote and accelerate protein folding. The protein is Chaperonin GroEL of Tsukamurella tyrosinosolvens.